The primary structure comprises 1021 residues: Ankyrin repeat- and BTB/POZ domain-containing protein 3-A (1021 aa).

A helical membrane pass occupies residues 160–180; sequence MVLSWTISVNCITAALSALSL. ANK repeat units lie at residues 515–544, 561–590, 599–628, and 642–671; these read QGMT…DINS, RQGT…NVEG, YTET…DPLI, and GEMN…KDKG. A BTB domain is found at 836 to 902; that stretch reads SDVTFLVEGK…LYCGGTESLH (67 aa).

The protein localises to the membrane. The protein is Ankyrin repeat- and BTB/POZ domain-containing protein 3-A (abtb3a) of Danio rerio (Zebrafish).